The chain runs to 488 residues: TOX high mobility group box family member 2 (488 aa).

Residues 76–114 (YEIPPITPPNLPEPSLLHLGDHEASYHSLCHGLTPNGLL) form a required for transcriptional activation region. Disordered regions lie at residues 192–258 (RSSI…PQKP), 293–328 (WDSLGEEQKQSSPDQGETKSTQANPPAKMLPPKQPM), and 363–473 (SLLP…ECGI). The segment covering 204-216 (GSKSATPSPSSST) has biased composition (low complexity). The span at 222–239 (EVHFKISGEKRPSADPGK) shows a compositional bias: basic and acidic residues. Residues 223–252 (VHFKISGEKRPSADPGKKAKNPKKKKKKDP) carry the Nuclear localization signal motif. Basic residues predominate over residues 240–250 (KAKNPKKKKKK). Positions 255–323 (PQKPVSAYAL…QANPPAKMLP (69 aa)) form a DNA-binding region, HMG box. Over residues 302 to 316 (QSSPDQGETKSTQAN) the composition is skewed to polar residues. Low complexity predominate over residues 443–460 (PSSSGSCSPGPSNPTSSG).

The protein resides in the nucleus. In terms of biological role, putative transcriptional activator involved in the hypothalamo-pituitary-gonadal system. This Homo sapiens (Human) protein is TOX high mobility group box family member 2 (TOX2).